Reading from the N-terminus, the 754-residue chain is tRNA 5-methylaminomethyl-2-thiouridine biosynthesis bifunctional protein MnmC (754 aa).

The tract at residues 1 to 320 (MPSCYEHSAQ…RRQAVNNSDS (320 aa)) is tRNA (mnm(5)s(2)U34)-methyltransferase. The segment at 324-754 (IGGGIAGACL…RKLLKGKALC (431 aa)) is FAD-dependent cmnm(5)s(2)U34 oxidoreductase.

In the N-terminal section; belongs to the methyltransferase superfamily. tRNA (mnm(5)s(2)U34)-methyltransferase family. It in the C-terminal section; belongs to the DAO family. FAD is required as a cofactor.

It is found in the cytoplasm. The enzyme catalyses 5-aminomethyl-2-thiouridine(34) in tRNA + S-adenosyl-L-methionine = 5-methylaminomethyl-2-thiouridine(34) in tRNA + S-adenosyl-L-homocysteine + H(+). Functionally, catalyzes the last two steps in the biosynthesis of 5-methylaminomethyl-2-thiouridine (mnm(5)s(2)U) at the wobble position (U34) in tRNA. Catalyzes the FAD-dependent demodification of cmnm(5)s(2)U34 to nm(5)s(2)U34, followed by the transfer of a methyl group from S-adenosyl-L-methionine to nm(5)s(2)U34, to form mnm(5)s(2)U34. In Shewanella denitrificans (strain OS217 / ATCC BAA-1090 / DSM 15013), this protein is tRNA 5-methylaminomethyl-2-thiouridine biosynthesis bifunctional protein MnmC.